A 343-amino-acid chain; its full sequence is Dihydroorotase (343 aa).

Zn(2+) is bound by residues histidine 14 and histidine 16. Residues 16 to 18 (HLR) and asparagine 42 contribute to the substrate site. Positions 100, 137, and 175 each coordinate Zn(2+). Lysine 100 is modified (N6-carboxylysine). Histidine 137 lines the substrate pocket. Leucine 220 provides a ligand contact to substrate. Aspartate 248 provides a ligand contact to Zn(2+). Aspartate 248 is an active-site residue. Histidine 252 and alanine 264 together coordinate substrate.

Belongs to the metallo-dependent hydrolases superfamily. DHOase family. Class II DHOase subfamily. In terms of assembly, homodimer. Zn(2+) is required as a cofactor.

It catalyses the reaction (S)-dihydroorotate + H2O = N-carbamoyl-L-aspartate + H(+). The protein operates within pyrimidine metabolism; UMP biosynthesis via de novo pathway; (S)-dihydroorotate from bicarbonate: step 3/3. Catalyzes the reversible cyclization of carbamoyl aspartate to dihydroorotate. This Parasynechococcus marenigrum (strain WH8102) protein is Dihydroorotase.